Reading from the N-terminus, the 37-residue chain is Large ribosomal subunit protein bL36 (37 aa).

The protein belongs to the bacterial ribosomal protein bL36 family.

The chain is Large ribosomal subunit protein bL36 from Nocardia farcinica (strain IFM 10152).